A 609-amino-acid polypeptide reads, in one-letter code: Indole-3-acetic acid-amido synthetase GH3.17 (609 aa).

This sequence belongs to the IAA-amido conjugating enzyme family.

Its function is as follows. Catalyzes the synthesis of indole-3-acetic acid (IAA)-amino acid conjugates, providing a mechanism for the plant to cope with the presence of excess auxin. Strongly reactive with Glu, Gln, Trp, Asp, Ala, Leu, Phe, Gly, Tyr, Met, Ile and Val. Appears to favor Glu over Asp while the other GH3 favor Asp over Glu. Little or no product formation with His, Ser, Thr, Arg, Lys, or Cys. Also active on pyruvic and butyric acid analogs of IAA, PAA and the synthetic auxin naphthaleneacetic acid (NAA). The two chlorinated synthetic auxin herbicides 2,4-D and 3,6-dichloro-o-anisic acid (dicamba) cannot be used as substrates. This chain is Indole-3-acetic acid-amido synthetase GH3.17 (GH3.17), found in Arabidopsis thaliana (Mouse-ear cress).